We begin with the raw amino-acid sequence, 234 residues long: Large ribosomal subunit protein uL1 (234 aa).

It belongs to the universal ribosomal protein uL1 family. Part of the 50S ribosomal subunit.

Its function is as follows. Binds directly to 23S rRNA. The L1 stalk is quite mobile in the ribosome, and is involved in E site tRNA release. Functionally, protein L1 is also a translational repressor protein, it controls the translation of the L11 operon by binding to its mRNA. The sequence is that of Large ribosomal subunit protein uL1 from Cronobacter sakazakii (strain ATCC BAA-894) (Enterobacter sakazakii).